Consider the following 1001-residue polypeptide: O-GlcNAcase NagJ (1001 aa).

The N-terminal stretch at 1–30 is a signal peptide; that stretch reads MKRKMLKRLLTSAFACMFIANGLITTTVRA. The segment at 179–469 is catalytic domain; that stretch reads VSARGIVEGF…WNRAIDMLYG (291 aa). Residues 180–452 form the GH84 domain; it reads SARGIVEGFY…TAADYSWNMD (273 aa). The a protein site is built by Gly187, Lys218, and Asp297. Asp298 (proton donor) is an active-site residue. Residues Tyr335, 394–396, Asp401, and Asn429 contribute to the a protein site; that span reads WWN. 2 coiled-coil regions span residues 515–543 and 573–597; these read KEDA…KANL and VAQL…LNTA. In terms of domain architecture, Fibronectin type-III spans 916–1001; that stretch reads PVRDFKASEI…KESLTLRTAR (86 aa).

Belongs to the glycosyl hydrolase 84 family.

The enzyme catalyses 3-O-(N-acetyl-beta-D-glucosaminyl)-L-seryl-[protein] + H2O = N-acetyl-D-glucosamine + L-seryl-[protein]. It catalyses the reaction 3-O-(N-acetyl-beta-D-glucosaminyl)-L-threonyl-[protein] + H2O = L-threonyl-[protein] + N-acetyl-D-glucosamine. With respect to regulation, inhibited by O-(2-acetamido-2-deoxy-D-glucopyranosylidene)amino-N-phenyl-carbamate (PUGNAc) and streptozotocin. Functionally, binds carbohydrates. Capable of hydrolyzing the glycosidic link of O-GlcNAcylated proteins. Can bind and deglycosylate O-glycosylated peptides from mammals. The sequence is that of O-GlcNAcase NagJ (nagJ) from Clostridium perfringens (strain ATCC 13124 / DSM 756 / JCM 1290 / NCIMB 6125 / NCTC 8237 / Type A).